We begin with the raw amino-acid sequence, 152 residues long: Transcriptional regulator MraZ (152 aa).

SpoVT-AbrB domains are found at residues 7–54 (INSI…TMDE) and 83–126 (ASEM…SQEA).

The protein belongs to the MraZ family. In terms of assembly, forms oligomers.

The protein resides in the cytoplasm. It is found in the nucleoid. The polypeptide is Transcriptional regulator MraZ (Hydrogenovibrio crunogenus (strain DSM 25203 / XCL-2) (Thiomicrospira crunogena)).